We begin with the raw amino-acid sequence, 24 residues long: Osteocalcin (24 aa).

Positions 1–24 constitute a Gla domain; sequence REVCELNPDCDELADHIGFQEAYR. Glu-2, Glu-5, and Asp-11 together coordinate Ca(2+). 4-carboxyglutamate occurs at positions 2 and 5. An intrachain disulfide couples Cys-4 to Cys-10.

This sequence belongs to the osteocalcin/matrix Gla protein family. Gamma-carboxyglutamate residues are formed by vitamin K dependent carboxylation by GGCX. These residues are essential for the binding of calcium. Decarboxylation promotes the hormone activity.

The protein localises to the secreted. The carboxylated form is one of the main organic components of the bone matrix, which constitutes 1-2% of the total bone protein: it acts as a negative regulator of bone formation and is required to limit bone formation without impairing bone resorption or mineralization. The carboxylated form binds strongly to apatite and calcium. In terms of biological role, the uncarboxylated form acts as a hormone secreted by osteoblasts, which regulates different cellular processes, such as energy metabolism, male fertility and brain development. Regulates of energy metabolism by acting as a hormone favoring pancreatic beta-cell proliferation, insulin secretion and sensitivity and energy expenditure. Uncarboxylated osteocalcin hormone also promotes testosterone production in the testes: acts as a ligand for G protein-coupled receptor GPRC6A at the surface of Leydig cells, initiating a signaling response that promotes the expression of enzymes required for testosterone synthesis in a CREB-dependent manner. Also acts as a regulator of brain development: osteocalcin hormone crosses the blood-brain barrier and acts as a ligand for GPR158 on neurons, initiating a signaling response that prevents neuronal apoptosis in the hippocampus, favors the synthesis of all monoamine neurotransmitters and inhibits that of gamma-aminobutyric acid (GABA). Osteocalcin also crosses the placenta during pregnancy and maternal osteocalcin is required for fetal brain development. This chain is Osteocalcin, found in Homo sapiens neanderthalensis (Neanderthal).